Here is a 132-residue protein sequence, read N- to C-terminus: C-X-C motif chemokine 5 (132 aa).

An N-terminal signal peptide occupies residues 1–40 (MSLQLRSSARIPSGSISPFMRMAPLAFLLLFTLPQHLAEA). Cystine bridges form between Cys-53/Cys-79 and Cys-55/Cys-95.

It belongs to the intercrine alpha (chemokine CxC) family. In terms of assembly, monomer. Homodimer. In terms of processing, GCP-2(1-78) and GCP-2(9-78) are produced by proteolytic cleavage after secretion from fibroblasts and epithelial cells. GCP-2(9-78) is the most prominent form. A number of additional N-terminal (processed between pos. 41 and 48) and C-terminal (processed between pos. 118 and 132) processed forms have been identified, probably also representing intermediate states.

Its subcellular location is the secreted. In terms of biological role, may participate in the recruitment of inflammatory cells by injured or infected tissue. GCP-2(1-78) and, more potent, GCP-2(9-78) attract neutrophils and are involved in neutrophil activation. The polypeptide is C-X-C motif chemokine 5 (Cxcl5) (Mus musculus (Mouse)).